We begin with the raw amino-acid sequence, 1380 residues long: Receptor-type adenylate cyclase A (1380 aa).

Topologically, residues 1–34 (MAMQIRPSLGGCLRHGGAGDHAARRLSRLRAAKV) are cytoplasmic. Residues 35 to 55 (FVPTAVVCVLLCCAPWVMAEI) form a helical membrane-spanning segment. Residues 56-891 (TNDAEREPVY…SHALTPAQRN (836 aa)) lie on the Extracellular side of the membrane. Asn-422, Asn-478, Asn-497, and Asn-567 each carry an N-linked (GlcNAc...) asparagine glycan. Residues 892 to 912 (GLIAGCVVGAVVLIATCTLLL) traverse the membrane as a helical segment. Topologically, residues 913–1380 (YCCMDNRNND…NPHYARHAFE (468 aa)) are cytoplasmic. Positions 933-1087 (TLLFTDIESS…DTSNMAARTE (155 aa)) constitute a Guanylate cyclase domain. The Mg(2+) site is built by Asp-938 and Asp-981. Residues 1270–1298 (LAREGDSAAGGVRPRLPGSPVTSLPAGGS) are disordered.

This sequence belongs to the adenylyl cyclase class-3 family. It depends on Mg(2+) as a cofactor.

It is found in the membrane. The catalysed reaction is ATP = 3',5'-cyclic AMP + diphosphate. Functionally, could act as a receptor for an unknown ligand. In Leishmania donovani, this protein is Receptor-type adenylate cyclase A (RAC-A).